The primary structure comprises 269 residues: Ribosomal RNA small subunit methyltransferase A (269 aa).

S-adenosyl-L-methionine contacts are provided by H12, L14, G39, E60, D81, and N103.

It belongs to the class I-like SAM-binding methyltransferase superfamily. rRNA adenine N(6)-methyltransferase family. RsmA subfamily.

Its subcellular location is the cytoplasm. It catalyses the reaction adenosine(1518)/adenosine(1519) in 16S rRNA + 4 S-adenosyl-L-methionine = N(6)-dimethyladenosine(1518)/N(6)-dimethyladenosine(1519) in 16S rRNA + 4 S-adenosyl-L-homocysteine + 4 H(+). Its function is as follows. Specifically dimethylates two adjacent adenosines (A1518 and A1519) in the loop of a conserved hairpin near the 3'-end of 16S rRNA in the 30S particle. May play a critical role in biogenesis of 30S subunits. This Leptothrix cholodnii (strain ATCC 51168 / LMG 8142 / SP-6) (Leptothrix discophora (strain SP-6)) protein is Ribosomal RNA small subunit methyltransferase A.